The following is a 727-amino-acid chain: Catalase-peroxidase (727 aa).

The segment at residues 95–218 (WHSAGTYRII…LAAVQMGLIY (124 aa)) is a cross-link (tryptophyl-tyrosyl-methioninium (Trp-Tyr) (with M-244)). The active-site Proton acceptor is histidine 96. The tryptophyl-tyrosyl-methioninium (Tyr-Met) (with W-95) cross-link spans 218-244 (YVNPEGPNGEPDVLGAAKDIKESFGKM). Histidine 259 provides a ligand contact to heme b.

The protein belongs to the peroxidase family. Peroxidase/catalase subfamily. Homodimer or homotetramer. It depends on heme b as a cofactor. In terms of processing, formation of the three residue Trp-Tyr-Met cross-link is important for the catalase, but not the peroxidase activity of the enzyme.

It carries out the reaction H2O2 + AH2 = A + 2 H2O. It catalyses the reaction 2 H2O2 = O2 + 2 H2O. Its function is as follows. Bifunctional enzyme with both catalase and broad-spectrum peroxidase activity. The chain is Catalase-peroxidase from Persephonella marina (strain DSM 14350 / EX-H1).